The primary structure comprises 404 residues: Na(+)/H(+) antiporter NhaA 2 (404 aa).

Transmembrane regions (helical) follow at residues 24 to 44, 67 to 87, 103 to 123, 132 to 152, 161 to 181, 184 to 204, 216 to 236, 266 to 286, 303 to 323, 339 to 359, and 372 to 392; these read GIILLICAIAAIMIANSSFSG, VLHWINDGLMAIFFLVVGMEI, ILPISAAIGGMIVPAIIYALF, GWGIPMATDIAFALGMLSLVA, VFLTALAIVDDLGAIIVIAIF, SQISWIALLLGLIVFATLILA, IILGIILWICLLKSGIHATIA, TPWSSFVIMPIFAFANAGIII, IIFGLFVGKQIGIFGTSFILI, LYGASVFGGIGFTMSIFVSSL, and MCIMIASILAATYGTIVFKFI.

It belongs to the NhaA Na(+)/H(+) (TC 2.A.33) antiporter family.

The protein resides in the cell membrane. It catalyses the reaction Na(+)(in) + 2 H(+)(out) = Na(+)(out) + 2 H(+)(in). In terms of biological role, na(+)/H(+) antiporter that extrudes sodium in exchange for external protons. This Clostridium beijerinckii (strain ATCC 51743 / NCIMB 8052) (Clostridium acetobutylicum) protein is Na(+)/H(+) antiporter NhaA 2.